A 377-amino-acid polypeptide reads, in one-letter code: 5-hydroxytryptamine receptor 1D (377 aa).

Asn5, Asn17, and Asn21 each carry an N-linked (GlcNAc...) asparagine glycan. 3 helical membrane-spanning segments follow: residues 39–64 (ISLA…TTIL), 76–97 (LIGS…ISIA), and 110–134 (LCDI…VIAL). The cysteines at positions 111 and 188 are disulfide-linked. 2 residues coordinate serotonin: Asp118 and Cys122. The short motif at 135-137 (DRY) is the DRY motif; important for ligand-induced conformation changes element. The next 4 helical transmembrane spans lie at 155-176 (AAAM…PLFW), 195-218 (ISYT…VLYG), 301-326 (KTLG…VLPI), and 336-359 (GLFD…YTVF). Position 321 (Ser321) interacts with serotonin. An NPxxY motif; important for ligand-induced conformation changes and signaling motif is present at residues 352-356 (NPIIY).

It belongs to the G-protein coupled receptor 1 family. Homodimer. Heterodimer with HTR1B.

It is found in the cell membrane. G-protein coupled receptor for 5-hydroxytryptamine (serotonin). Also functions as a receptor for ergot alkaloid derivatives, various anxiolytic and antidepressant drugs and other psychoactive substances. Ligand binding causes a conformation change that triggers signaling via guanine nucleotide-binding proteins (G proteins) and modulates the activity of downstream effectors, such as adenylate cyclase. HTR1D is coupled to G(i)/G(o) G alpha proteins and mediates inhibitory neurotransmission by inhibiting adenylate cyclase activity. Regulates the release of 5-hydroxytryptamine in the brain, and thereby affects neural activity. May also play a role in regulating the release of other neurotransmitters. May play a role in vasoconstriction. The sequence is that of 5-hydroxytryptamine receptor 1D (HTR1D) from Oryctolagus cuniculus (Rabbit).